A 1065-amino-acid chain; its full sequence is Carbamoyl phosphate synthase large chain (1065 aa).

The carboxyphosphate synthetic domain stretch occupies residues 1 to 401; that stretch reads MPLDKTIKKV…ALLKAVTSLE (401 aa). ATP contacts are provided by Arg-129, Arg-169, Gly-175, Gly-176, Gln-208, Val-210, Glu-215, Gly-241, Val-242, His-243, Gln-284, and Glu-298. An ATP-grasp 1 domain is found at 133–327; that stretch reads KNLMEEIDEP…IAKIAAKIAV (195 aa). Mg(2+)-binding residues include Gln-284, Glu-298, and Asn-300. Residues Gln-284, Glu-298, and Asn-300 each coordinate Mn(2+). The segment at 402–548 is oligomerization domain; that stretch reads GKISGLRLEK…YSSYENEDEN (147 aa). The carbamoyl phosphate synthetic domain stretch occupies residues 549 to 931; the sequence is EVTDDKKIVV…AIYKGFRAAG (383 aa). The 191-residue stretch at 673–863 folds into the ATP-grasp 2 domain; sequence SELLKELNIP…MVKLAVEILT (191 aa). Residues Arg-709, Lys-748, Ile-750, Glu-754, Gly-779, Val-780, His-781, Ser-782, Gln-822, and Glu-834 each contribute to the ATP site. Mg(2+) is bound by residues Gln-822, Glu-834, and Asn-836. Mn(2+)-binding residues include Gln-822, Glu-834, and Asn-836. The MGS-like domain occupies 932–1065; that stretch reads IEVPKDGGNL…EYRAMKEYFK (134 aa). Residues 932–1065 are allosteric domain; it reads IEVPKDGGNL…EYRAMKEYFK (134 aa).

This sequence belongs to the CarB family. In terms of assembly, composed of two chains; the small (or glutamine) chain promotes the hydrolysis of glutamine to ammonia, which is used by the large (or ammonia) chain to synthesize carbamoyl phosphate. Tetramer of heterodimers (alpha,beta)4. Requires Mg(2+) as cofactor. Mn(2+) is required as a cofactor.

It catalyses the reaction hydrogencarbonate + L-glutamine + 2 ATP + H2O = carbamoyl phosphate + L-glutamate + 2 ADP + phosphate + 2 H(+). The enzyme catalyses hydrogencarbonate + NH4(+) + 2 ATP = carbamoyl phosphate + 2 ADP + phosphate + 2 H(+). The protein operates within amino-acid biosynthesis; L-arginine biosynthesis; carbamoyl phosphate from bicarbonate: step 1/1. It functions in the pathway pyrimidine metabolism; UMP biosynthesis via de novo pathway; (S)-dihydroorotate from bicarbonate: step 1/3. In terms of biological role, large subunit of the glutamine-dependent carbamoyl phosphate synthetase (CPSase). CPSase catalyzes the formation of carbamoyl phosphate from the ammonia moiety of glutamine, carbonate, and phosphate donated by ATP, constituting the first step of 2 biosynthetic pathways, one leading to arginine and/or urea and the other to pyrimidine nucleotides. The large subunit (synthetase) binds the substrates ammonia (free or transferred from glutamine from the small subunit), hydrogencarbonate and ATP and carries out an ATP-coupled ligase reaction, activating hydrogencarbonate by forming carboxy phosphate which reacts with ammonia to form carbamoyl phosphate. The chain is Carbamoyl phosphate synthase large chain from Clostridium acetobutylicum (strain ATCC 824 / DSM 792 / JCM 1419 / IAM 19013 / LMG 5710 / NBRC 13948 / NRRL B-527 / VKM B-1787 / 2291 / W).